The following is a 227-amino-acid chain: 7-cyano-7-deazaguanine synthase (227 aa).

8-18 is a binding site for ATP; the sequence is FSGGQDSTTCL. Zn(2+) is bound by residues Cys-187, Cys-196, Cys-199, and Cys-202.

The protein belongs to the QueC family. The cofactor is Zn(2+).

The catalysed reaction is 7-carboxy-7-deazaguanine + NH4(+) + ATP = 7-cyano-7-deazaguanine + ADP + phosphate + H2O + H(+). Its pathway is purine metabolism; 7-cyano-7-deazaguanine biosynthesis. Its function is as follows. Catalyzes the ATP-dependent conversion of 7-carboxy-7-deazaguanine (CDG) to 7-cyano-7-deazaguanine (preQ(0)). This is 7-cyano-7-deazaguanine synthase from Aliivibrio salmonicida (strain LFI1238) (Vibrio salmonicida (strain LFI1238)).